The chain runs to 250 residues: 2,3-bisphosphoglycerate-dependent phosphoglycerate mutase (250 aa).

Residues 10-17 (RHGESQWN), 23-24 (TG), Arg62, 89-92 (ERHY), Lys100, 116-117 (RR), and 185-186 (GN) contribute to the substrate site. Catalysis depends on His11, which acts as the Tele-phosphohistidine intermediate. The active-site Proton donor/acceptor is Glu89.

This sequence belongs to the phosphoglycerate mutase family. BPG-dependent PGAM subfamily. As to quaternary structure, homodimer.

The enzyme catalyses (2R)-2-phosphoglycerate = (2R)-3-phosphoglycerate. It functions in the pathway carbohydrate degradation; glycolysis; pyruvate from D-glyceraldehyde 3-phosphate: step 3/5. Functionally, catalyzes the interconversion of 2-phosphoglycerate and 3-phosphoglycerate. The polypeptide is 2,3-bisphosphoglycerate-dependent phosphoglycerate mutase (Cronobacter sakazakii (strain ATCC BAA-894) (Enterobacter sakazakii)).